We begin with the raw amino-acid sequence, 95 residues long: Large ribosomal subunit protein uL23 (95 aa).

The protein belongs to the universal ribosomal protein uL23 family. In terms of assembly, part of the 50S ribosomal subunit. Contacts protein L29, and trigger factor when it is bound to the ribosome.

Functionally, one of the early assembly proteins it binds 23S rRNA. One of the proteins that surrounds the polypeptide exit tunnel on the outside of the ribosome. Forms the main docking site for trigger factor binding to the ribosome. The polypeptide is Large ribosomal subunit protein uL23 (Shouchella clausii (strain KSM-K16) (Alkalihalobacillus clausii)).